We begin with the raw amino-acid sequence, 332 residues long: Putative D-threonate 4-phosphate dehydrogenase (332 aa).

Residues histidine 140 and threonine 141 each coordinate substrate. A divalent metal cation-binding residues include histidine 170, histidine 214, and histidine 270. Positions 278, 287, and 296 each coordinate substrate.

The protein belongs to the PdxA family. PdxA2 subfamily. As to quaternary structure, homodimer. It depends on a divalent metal cation as a cofactor.

It carries out the reaction 4-O-phospho-D-threonate + NAD(+) = dihydroxyacetone phosphate + CO2 + NADH. Catalyzes the NAD-dependent oxidation and subsequent decarboxylation of D-threonate 4-phosphate to produce dihydroxyacetone phosphate (DHAP). The protein is Putative D-threonate 4-phosphate dehydrogenase of Oceanobacillus iheyensis (strain DSM 14371 / CIP 107618 / JCM 11309 / KCTC 3954 / HTE831).